The following is a 141-amino-acid chain: Drosulfakinins (141 aa).

Positions 1 to 31 are cleaved as a signal peptide; the sequence is MGLRSCTHLATLFMTLWAVAFCFLVVVPIPA. The propeptide occupies 32–73; the sequence is QTTSLQNAKDDRRLQELESKIGAESDQTNANLVGPSFSRFGD. Phe-82 is modified (phenylalanine amide). A propeptide spanning residues 86–111 is cleaved from the precursor; that stretch reads VPLISRPMIPIELDLLMDNDDERTKA. Tyr-117 is modified (sulfotyrosine). Phe-122 is subject to Phenylalanine amide. At Tyr-134 the chain carries Sulfotyrosine. Position 139 is a phenylalanine amide (Phe-139).

The protein belongs to the gastrin/cholecystokinin family.

Its subcellular location is the secreted. Its function is as follows. Drosulfakinin-0 (DSK 0) plays diverse biological roles including regulating gut muscle contraction in adults but not in larvae. This chain is Drosulfakinins, found in Drosophila simulans (Fruit fly).